The following is a 504-amino-acid chain: Endochitinase (504 aa).

Residues 1–22 (MNRTTLILFFIILSNTITVIHG) form the signal peptide. The GH18 domain maps to 23 to 392 (YVRGCYYTNW…NAISSELEGE (370 aa)). Cysteine 27 and cysteine 52 form a disulfide bridge. Chitin is bound by residues 78–79 (TE) and 105–108 (GGYN). The active-site Proton donor is the glutamate 148. Residues tyrosine 149, 212–215 (MSYD), and tryptophan 362 each bind chitin. The interval 389 to 450 (LEGESENPEI…YDTDETEGQE (62 aa)) is disordered. A compositionally biased stretch (low complexity) spans 396–408 (PEITTEEPSITET). Tandem repeats lie at residues 407–420 (ETEA…EETS) and 421–434 (ETEA…EETS). The interval 407 to 448 (ETEAYETDETEETSETEAYDTDETEETSETEATTYDTDETEG) is 3 X 14 AA approximate tandem repeats of E-T-E-A-Y-[ED]-T-D-E-T-E-E-T-S. The segment covering 409–435 (EAYETDETEETSETEAYDTDETEETSE) has biased composition (acidic residues). The stretch at 435–448 (ETEATTYDTDETEG) is one 3; approximate repeat. Residues 448–504 (GQECPERDGLFPHPTDCHLFIQCANNIAYVMQCPATTFFNDAIKVCDHMTNAPDTCI) form the Chitin-binding type-2 domain. A disulfide bond links cysteine 480 and cysteine 493.

The protein belongs to the glycosyl hydrolase 18 family. Chitinase class II subfamily. In terms of processing, O-glycosylated.

The catalysed reaction is Random endo-hydrolysis of N-acetyl-beta-D-glucosaminide (1-&gt;4)-beta-linkages in chitin and chitodextrins.. Microfilarial chitinase, which may function to degrade chitin-containing structures in the micro-filaria or in its mosquito vector during parasite development and transmission. In Brugia malayi (Filarial nematode worm), this protein is Endochitinase.